A 194-amino-acid polypeptide reads, in one-letter code: MRTATKTRITAETSIELSINLDSQAESIISTGVGFLDHMLTLFAKHSRITLNVKADGDTYIDAHHTVEDIGITLGLCLKEALADKASINRYGSAYVPMDESLGFCALDLSGRSYLVFDAELTNPKLGDFDTELVEEFFQAVAFNTEMNLHLRVLYGKNTHHKIEALFKAFGRALREAITINPEIKGVNSTKGVL.

Belongs to the imidazoleglycerol-phosphate dehydratase family.

The protein localises to the cytoplasm. The catalysed reaction is D-erythro-1-(imidazol-4-yl)glycerol 3-phosphate = 3-(imidazol-4-yl)-2-oxopropyl phosphate + H2O. It participates in amino-acid biosynthesis; L-histidine biosynthesis; L-histidine from 5-phospho-alpha-D-ribose 1-diphosphate: step 6/9. The protein is Imidazoleglycerol-phosphate dehydratase of Listeria monocytogenes serotype 4b (strain F2365).